Consider the following 339-residue polypeptide: Glyceraldehyde-3-phosphate dehydrogenase (339 aa).

Residues 13–14 (RI), Asp-35, and Lys-84 contribute to the NAD(+) site. Residues 156 to 158 (SCT), Thr-187, 216 to 217 (TG), and Arg-239 each bind D-glyceraldehyde 3-phosphate. Cys-157 functions as the Nucleophile in the catalytic mechanism. Asn-321 is a binding site for NAD(+).

It belongs to the glyceraldehyde-3-phosphate dehydrogenase family. Homotetramer.

It localises to the cytoplasm. The enzyme catalyses D-glyceraldehyde 3-phosphate + phosphate + NAD(+) = (2R)-3-phospho-glyceroyl phosphate + NADH + H(+). The protein operates within carbohydrate degradation; glycolysis; pyruvate from D-glyceraldehyde 3-phosphate: step 1/5. The chain is Glyceraldehyde-3-phosphate dehydrogenase from Onchocerca volvulus.